We begin with the raw amino-acid sequence, 555 residues long: CTP synthase (555 aa).

The tract at residues M1 to V277 is amidoligase domain. S26 contributes to the CTP binding site. Position 26 (S26) interacts with UTP. Residue G27–I32 coordinates ATP. Y67 contacts L-glutamine. D84 contributes to the ATP binding site. Mg(2+) is bound by residues D84 and E152. Residues D159 to E161, K198 to Q203, and K234 each bind CTP. Residues K198 to Q203 and K234 each bind UTP. Positions L307 to A542 constitute a Glutamine amidotransferase type-1 domain. G364 contacts L-glutamine. Catalysis depends on C391, which acts as the Nucleophile; for glutamine hydrolysis. Residues L392 to Q395, E415, and R472 each bind L-glutamine. Catalysis depends on residues H515 and E517.

This sequence belongs to the CTP synthase family. As to quaternary structure, homotetramer.

It carries out the reaction UTP + L-glutamine + ATP + H2O = CTP + L-glutamate + ADP + phosphate + 2 H(+). It catalyses the reaction L-glutamine + H2O = L-glutamate + NH4(+). The enzyme catalyses UTP + NH4(+) + ATP = CTP + ADP + phosphate + 2 H(+). Its pathway is pyrimidine metabolism; CTP biosynthesis via de novo pathway; CTP from UDP: step 2/2. Allosterically activated by GTP, when glutamine is the substrate; GTP has no effect on the reaction when ammonia is the substrate. The allosteric effector GTP functions by stabilizing the protein conformation that binds the tetrahedral intermediate(s) formed during glutamine hydrolysis. Inhibited by the product CTP, via allosteric rather than competitive inhibition. Its function is as follows. Catalyzes the ATP-dependent amination of UTP to CTP with either L-glutamine or ammonia as the source of nitrogen. Regulates intracellular CTP levels through interactions with the four ribonucleotide triphosphates. This Haloquadratum walsbyi (strain DSM 16790 / HBSQ001) protein is CTP synthase.